Here is a 79-residue protein sequence, read N- to C-terminus: ATP synthase subunit c (79 aa).

2 consecutive transmembrane segments (helical) span residues 11 to 31 (MAAAIMMGLAAIGAAIGIGIL) and 53 to 73 (FFIVMGLVDAIPMIAVGLGLY).

This sequence belongs to the ATPase C chain family. F-type ATPases have 2 components, F(1) - the catalytic core - and F(0) - the membrane proton channel. F(1) has five subunits: alpha(3), beta(3), gamma(1), delta(1), epsilon(1). F(0) has three main subunits: a(1), b(2) and c(10-14). The alpha and beta chains form an alternating ring which encloses part of the gamma chain. F(1) is attached to F(0) by a central stalk formed by the gamma and epsilon chains, while a peripheral stalk is formed by the delta and b chains.

It is found in the cell inner membrane. Functionally, f(1)F(0) ATP synthase produces ATP from ADP in the presence of a proton or sodium gradient. F-type ATPases consist of two structural domains, F(1) containing the extramembraneous catalytic core and F(0) containing the membrane proton channel, linked together by a central stalk and a peripheral stalk. During catalysis, ATP synthesis in the catalytic domain of F(1) is coupled via a rotary mechanism of the central stalk subunits to proton translocation. Key component of the F(0) channel; it plays a direct role in translocation across the membrane. A homomeric c-ring of between 10-14 subunits forms the central stalk rotor element with the F(1) delta and epsilon subunits. The protein is ATP synthase subunit c of Proteus mirabilis (strain HI4320).